The following is a 271-amino-acid chain: Ribosomal RNA small subunit methyltransferase A (271 aa).

S-adenosyl-L-methionine is bound by residues His14, Leu16, Gly41, Glu63, Asp89, and Asn107.

This sequence belongs to the class I-like SAM-binding methyltransferase superfamily. rRNA adenine N(6)-methyltransferase family. RsmA subfamily.

Its subcellular location is the cytoplasm. The catalysed reaction is adenosine(1518)/adenosine(1519) in 16S rRNA + 4 S-adenosyl-L-methionine = N(6)-dimethyladenosine(1518)/N(6)-dimethyladenosine(1519) in 16S rRNA + 4 S-adenosyl-L-homocysteine + 4 H(+). In terms of biological role, specifically dimethylates two adjacent adenosines (A1518 and A1519) in the loop of a conserved hairpin near the 3'-end of 16S rRNA in the 30S particle. May play a critical role in biogenesis of 30S subunits. This Lawsonia intracellularis (strain PHE/MN1-00) protein is Ribosomal RNA small subunit methyltransferase A.